The sequence spans 197 residues: MTSLYLASGSPRRQELLAQLGVTFERIVTGIEEQRQPQESAQQYVVRLAHKKAQAGVAQTAQDLPVLGADTIVILNGEVLEKPRDAEHAAQMLRKLSGQTHQVMTAVVLADSQHILDCLVVTDVTFRTLTDEDIAGYVASGEPLDKAGAYGIQGLGGCFVRKINGSYHAVVGLPLVETYELLSNFNALREKRDKHDG.

Catalysis depends on Asp70, which acts as the Proton acceptor.

The protein belongs to the Maf family. YhdE subfamily. Requires a divalent metal cation as cofactor.

The protein resides in the cytoplasm. It catalyses the reaction dTTP + H2O = dTMP + diphosphate + H(+). It carries out the reaction UTP + H2O = UMP + diphosphate + H(+). Its function is as follows. Nucleoside triphosphate pyrophosphatase that hydrolyzes dTTP and UTP. May have a dual role in cell division arrest and in preventing the incorporation of modified nucleotides into cellular nucleic acids. This is dTTP/UTP pyrophosphatase (yceF2) from Shigella boydii serotype 4 (strain Sb227).